A 312-amino-acid chain; its full sequence is Ribosomal RNA small subunit methyltransferase H (312 aa).

S-adenosyl-L-methionine contacts are provided by residues Ala-32 to His-34, Asp-52, Phe-79, Asp-100, and Gln-107.

Belongs to the methyltransferase superfamily. RsmH family.

It localises to the cytoplasm. It carries out the reaction cytidine(1402) in 16S rRNA + S-adenosyl-L-methionine = N(4)-methylcytidine(1402) in 16S rRNA + S-adenosyl-L-homocysteine + H(+). In terms of biological role, specifically methylates the N4 position of cytidine in position 1402 (C1402) of 16S rRNA. This Listeria monocytogenes serotype 4b (strain F2365) protein is Ribosomal RNA small subunit methyltransferase H.